The following is a 431-amino-acid chain: Gamma-glutamyl phosphate reductase (431 aa).

It belongs to the gamma-glutamyl phosphate reductase family.

It localises to the cytoplasm. The enzyme catalyses L-glutamate 5-semialdehyde + phosphate + NADP(+) = L-glutamyl 5-phosphate + NADPH + H(+). The protein operates within amino-acid biosynthesis; L-proline biosynthesis; L-glutamate 5-semialdehyde from L-glutamate: step 2/2. Catalyzes the NADPH-dependent reduction of L-glutamate 5-phosphate into L-glutamate 5-semialdehyde and phosphate. The product spontaneously undergoes cyclization to form 1-pyrroline-5-carboxylate. This is Gamma-glutamyl phosphate reductase from Bifidobacterium longum subsp. infantis (strain ATCC 15697 / DSM 20088 / JCM 1222 / NCTC 11817 / S12).